We begin with the raw amino-acid sequence, 294 residues long: Glyceraldehyde-3-phosphate dehydrogenase (294 aa).

Positions 19, 63, and 105 each coordinate NAD(+). D-glyceraldehyde 3-phosphate contacts are provided by residues 134–136 (SCT), threonine 165, 194–195 (TG), and arginine 217. The active-site Nucleophile is the cysteine 135.

It belongs to the glyceraldehyde-3-phosphate dehydrogenase family. In terms of assembly, homotetramer.

The protein resides in the cytoplasm. The enzyme catalyses D-glyceraldehyde 3-phosphate + phosphate + NAD(+) = (2R)-3-phospho-glyceroyl phosphate + NADH + H(+). Its pathway is carbohydrate degradation; glycolysis; pyruvate from D-glyceraldehyde 3-phosphate: step 1/5. In terms of biological role, catalyzes the oxidative phosphorylation of glyceraldehyde 3-phosphate (G3P) to 1,3-bisphosphoglycerate (BPG) using the cofactor NAD. The first reaction step involves the formation of a hemiacetal intermediate between G3P and a cysteine residue, and this hemiacetal intermediate is then oxidized to a thioester, with concomitant reduction of NAD to NADH. The reduced NADH is then exchanged with the second NAD, and the thioester is attacked by a nucleophilic inorganic phosphate to produce BPG. In Atlantibacter hermannii (Escherichia hermannii), this protein is Glyceraldehyde-3-phosphate dehydrogenase (gap).